A 110-amino-acid polypeptide reads, in one-letter code: Guanine nucleotide-binding protein subunit gamma (110 aa).

The S-palmitoyl cysteine moiety is linked to residue Cys106. Cysteine methyl ester is present on Cys107. Residue Cys107 is the site of S-farnesyl cysteine attachment. Residues 108–110 (TLM) constitute a propeptide, removed in mature form.

Belongs to the G protein gamma family. G proteins are composed of 3 units, alpha, beta and gamma. The beta-gamma subunit complex (STE4-STE18 complex) interacts with PLP1 and PLP2.

The protein resides in the membrane. Implicated in the pheromone A- and alpha-factor response pathway. The beta and gamma chains of the putative yeast mating response pathway G protein play a positive role in initiation of the mating response. This is Guanine nucleotide-binding protein subunit gamma (STE18) from Saccharomyces cerevisiae (strain ATCC 204508 / S288c) (Baker's yeast).